Here is a 119-residue protein sequence, read N- to C-terminus: Large ribosomal subunit protein bL19 (119 aa).

This sequence belongs to the bacterial ribosomal protein bL19 family.

Its function is as follows. This protein is located at the 30S-50S ribosomal subunit interface and may play a role in the structure and function of the aminoacyl-tRNA binding site. The chain is Large ribosomal subunit protein bL19 from Leuconostoc citreum (strain KM20).